A 159-amino-acid chain; its full sequence is D-aminoacyl-tRNA deacylase (159 aa).

Residues 146–147 (GP) carry the Gly-cisPro motif, important for rejection of L-amino acids motif.

It belongs to the DTD family. In terms of assembly, homodimer.

It is found in the cytoplasm. The enzyme catalyses glycyl-tRNA(Ala) + H2O = tRNA(Ala) + glycine + H(+). It catalyses the reaction a D-aminoacyl-tRNA + H2O = a tRNA + a D-alpha-amino acid + H(+). Its function is as follows. An aminoacyl-tRNA editing enzyme that deacylates mischarged D-aminoacyl-tRNAs. Also deacylates mischarged glycyl-tRNA(Ala), protecting cells against glycine mischarging by AlaRS. Acts via tRNA-based rather than protein-based catalysis; rejects L-amino acids rather than detecting D-amino acids in the active site. By recycling D-aminoacyl-tRNA to D-amino acids and free tRNA molecules, this enzyme counteracts the toxicity associated with the formation of D-aminoacyl-tRNA entities in vivo and helps enforce protein L-homochirality. The polypeptide is D-aminoacyl-tRNA deacylase (Bifidobacterium animalis subsp. lactis (strain AD011)).